A 118-amino-acid polypeptide reads, in one-letter code: UPF0102 protein NE0719 (118 aa).

This sequence belongs to the UPF0102 family.

The polypeptide is UPF0102 protein NE0719 (Nitrosomonas europaea (strain ATCC 19718 / CIP 103999 / KCTC 2705 / NBRC 14298)).